An 88-amino-acid polypeptide reads, in one-letter code: uncharacterized protein (88 aa).

This is an uncharacterized protein from Gracula (BFDV).